Reading from the N-terminus, the 288-residue chain is Solute carrier family 25 member 45 (288 aa).

Solcar repeat units lie at residues 1–83 (MPVE…TLLV), 97–191 (PSYM…LCRQ), and 199–286 (PSSA…LLRW). Helical transmembrane passes span 6–26 (FVAGWISGALGLVLGHPFDTV), 63–83 (IASIAVVNSVLFGVYSNTLLV), 100–120 (MHIFLAGCTGGFLQAYCLAPF), 166–186 (GAWALTLRDTPTVGIYFITYE), 202–222 (ATVLVAGGFAGIASWVAATPL), and 266–286 (SARAFPVNAVTFLSYEYLLRW).

This sequence belongs to the mitochondrial carrier (TC 2.A.29) family.

The protein localises to the mitochondrion inner membrane. This chain is Solute carrier family 25 member 45 (SLC25A45), found in Homo sapiens (Human).